A 408-amino-acid chain; its full sequence is CinA-like protein (408 aa).

The protein belongs to the CinA family.

The chain is CinA-like protein from Fervidobacterium nodosum (strain ATCC 35602 / DSM 5306 / Rt17-B1).